Here is a 1771-residue protein sequence, read N- to C-terminus: Fatty acid synthase alpha subunit pkiB (1771 aa).

Polar residues predominate over residues 108 to 130; sequence SQPTQPQFEPTSPSHLTKRSPSP. Positions 108 to 133 are disordered; that stretch reads SQPTQPQFEPTSPSHLTKRSPSPSKA. One can recognise a Carrier domain in the interval 143-221; sequence ELTLQAGHVI…ESFQPEFSGI (79 aa). Serine 181 bears the O-(pantetheine 4'-phosphoryl)serine mark. The beta-ketoacyl reductase stretch occupies residues 575–771; that stretch reads HKAVLVTGAG…CGAVIGWTRG (197 aa). The 521-residue stretch at 1011–1531 folds into the Ketosynthase family 3 (KS3) domain; sequence KELLHEVAVE…QKGAINIMVS (521 aa). Residues cysteine 1197, histidine 1416, and histidine 1457 each act as for beta-ketoacyl synthase activity in the active site. Residues aspartate 1650, valine 1651, and glutamate 1652 each contribute to the Mg(2+) site. Residues 1650–1652, tyrosine 1676, serine 1686, 1695–1705, 1719–1722, and 1753–1755 contribute to the acetyl-CoA site; these read DVE, EAAFKSLQTTS, EVGG, and ISH. Positions 1754 and 1755 each coordinate Mg(2+).

It belongs to the thiolase-like superfamily. Fungal fatty acid synthetase subunit alpha family. As to quaternary structure, [Alpha(6)beta(6)] hexamers of two multifunctional subunits (alpha and beta).

The catalysed reaction is acetyl-CoA + n malonyl-CoA + 2n NADPH + 4n H(+) = a long-chain-acyl-CoA + n CoA + n CO2 + 2n NADP(+).. It carries out the reaction a fatty acyl-[ACP] + malonyl-[ACP] + H(+) = a 3-oxoacyl-[ACP] + holo-[ACP] + CO2. The enzyme catalyses a (3R)-hydroxyacyl-[ACP] + NADP(+) = a 3-oxoacyl-[ACP] + NADPH + H(+). The protein operates within secondary metabolite biosynthesis. Fatty acid synthase alpha subunit; part of the pki gene cluster that mediates the biosynthesis of 2,4-dihydroxy-3-methyl-6-(2-oxoundecyl)benzaldehyde. The first step in the pathway is the generation of the decanoyl starter unit by the FAS composed of subunits pkiB and pkiC, which is then transferred directly from the FAS to the SAT domain of the non-reducing polyketide synthase pkiA. PkiA condenses the decanoyyl starter unit with 4 malonyl-CoA units and performs one methylation step to yield 2,4-dihydroxy-3-methyl-6-(2-oxoundecyl)benzaldehyde. In Emericella nidulans (strain FGSC A4 / ATCC 38163 / CBS 112.46 / NRRL 194 / M139) (Aspergillus nidulans), this protein is Fatty acid synthase alpha subunit pkiB.